A 206-amino-acid polypeptide reads, in one-letter code: ATP phosphoribosyltransferase (206 aa).

It belongs to the ATP phosphoribosyltransferase family. Short subfamily. In terms of assembly, heteromultimer composed of HisG and HisZ subunits.

The protein resides in the cytoplasm. The catalysed reaction is 1-(5-phospho-beta-D-ribosyl)-ATP + diphosphate = 5-phospho-alpha-D-ribose 1-diphosphate + ATP. Its pathway is amino-acid biosynthesis; L-histidine biosynthesis; L-histidine from 5-phospho-alpha-D-ribose 1-diphosphate: step 1/9. In terms of biological role, catalyzes the condensation of ATP and 5-phosphoribose 1-diphosphate to form N'-(5'-phosphoribosyl)-ATP (PR-ATP). Has a crucial role in the pathway because the rate of histidine biosynthesis seems to be controlled primarily by regulation of HisG enzymatic activity. This chain is ATP phosphoribosyltransferase, found in Thermus thermophilus (strain ATCC 27634 / DSM 579 / HB8).